We begin with the raw amino-acid sequence, 549 residues long: NAC domain-containing protein 53 (549 aa).

Positions 9–159 (LAPGFRFHPT…AFVLCRIFQK (151 aa)) constitute an NAC domain. The DNA-binding element occupies 108–165 (VGMKKTLVYHKGRAPRGERTNWVMHEYRLVDQDLDKTGVHQDAFVLCRIFQKSGSGPK). The span at 395-416 (LEKEETSRSKHVVEEKEKDEAS) shows a compositional bias: basic and acidic residues. The interval 395–418 (LEKEETSRSKHVVEEKEKDEASCS) is disordered. A helical membrane pass occupies residues 526 to 546 (LIFMCFWVLLLSVSFKVSILV).

As to expression, expressed in roots, rosette leaves, cauline leaves, shoot apex and stems.

It localises to the endoplasmic reticulum membrane. The protein localises to the nucleus. Transcriptional activator activated by proteolytic cleavage through regulated intramembrane proteolysis (RIP). Promotes reactive oxygen species (ROS) production during drought-induced leaf senescence. In response to abscisic acid (ABA)-mediated drought stress signals, binds directly to the promoters of RBOHC and RBOHE genes, encoding ROS biosynthetic enzymes, resulting in ROS accumulation and triggering leaf senescence via programmed cell death (PCD). ROS-induced leaf senescence sustains plant survival under drought conditions. Involved in heat stress response. Modulates PCD through a ROS-mediated positive feedback control under heat stress conditions. This may provide an adaptation strategy for plant survival under extreme heat stress conditions. Acts as a repressor in preventing anther dehiscence during stamen development by suppressing genes that participate in jasmonic acid (JA) biosynthesis, such as DAD1, AOS, AOC3, OPR3 and 4CLL5/OPCL1. In Arabidopsis thaliana (Mouse-ear cress), this protein is NAC domain-containing protein 53.